We begin with the raw amino-acid sequence, 308 residues long: Very-long-chain enoyl-CoA reductase (308 aa).

The Cytoplasmic segment spans residues 1 to 86; the sequence is MKHYEVEIRD…YFRDLGAQIS (86 aa). K22 is subject to N6-acetyllysine. S58 carries the post-translational modification Phosphoserine. An N6-acetyllysine modification is found at K60. The helical transmembrane segment at 87–106 threads the bilayer; the sequence is WVTVFLTEYAGPLFIYLLFY. Residues 107–124 lie on the Lumenal side of the membrane; sequence FRVPFIYGRKYDFTSSRH. Residues 125 to 147 form a helical membrane-spanning segment; the sequence is TVVHLACMCHSFHYIKRLLETLF. The Cytoplasmic segment spans residues 148 to 158; the sequence is VHRFSHGTMPL. The helical transmembrane segment at 159–180 threads the bilayer; it reads RNIFKNCTYYWGFAAWMAYYIN. Residues 181 to 189 are Lumenal-facing; that stretch reads HPLYTPPTY. A helical membrane pass occupies residues 190–216; sequence GVQQVKLALAVFVICQLGNFSIHMALR. At 217–245 the chain is on the cytoplasmic side; the sequence is DLRPAGSKTRKIPYPTKNPFTWLFLLVSC. Residues 246–262 form a helical membrane-spanning segment; the sequence is PNYTYEVGSWIGFAILT. The Lumenal segment spans residues 263–264; the sequence is QC. The chain crosses the membrane as a helical span at residues 265–292; the sequence is VPVALFSLVGFTQMTIWAKGKHRSYLKE. Topologically, residues 293-308 are cytoplasmic; sequence FRDYPPLRMPIIPFLL.

It belongs to the steroid 5-alpha reductase family. As to quaternary structure, interacts with ELOVL1 and LASS2. Post-translationally, glycosylated.

It is found in the endoplasmic reticulum membrane. The catalysed reaction is a very-long-chain 2,3-saturated fatty acyl-CoA + NADP(+) = a very-long-chain (2E)-enoyl-CoA + NADPH + H(+). It catalyses the reaction octadecanoyl-CoA + NADP(+) = (2E)-octadecenoyl-CoA + NADPH + H(+). It carries out the reaction (2E,7Z,10Z,13Z,16Z)-docosapentaenoyl-CoA + NADPH + H(+) = (7Z,10Z,13Z,16Z)-docosatetraenoyl-CoA + NADP(+). The enzyme catalyses (2E,7Z,10Z,13Z,16Z,19Z)-docosahexaenoyl-CoA + NADPH + H(+) = (7Z,10Z,13Z,16Z,19Z)-docosapentaenoyl-CoA + NADP(+). The catalysed reaction is (2E,8Z,11Z,14Z)-eicosatetraenoyl-CoA + NADPH + H(+) = (8Z,11Z,14Z)-eicosatrienoyl-CoA + NADP(+). It catalyses the reaction (2E)-hexadecenoyl-CoA + NADPH + H(+) = hexadecanoyl-CoA + NADP(+). The protein operates within lipid metabolism; fatty acid biosynthesis. It functions in the pathway lipid metabolism; sphingolipid metabolism. Functionally, involved in both the production of very long-chain fatty acids for sphingolipid synthesis and the degradation of the sphingosine moiety in sphingolipids through the sphingosine 1-phosphate metabolic pathway. Catalyzes the last of the four reactions of the long-chain fatty acids elongation cycle. This endoplasmic reticulum-bound enzymatic process, allows the addition of 2 carbons to the chain of long- and very long-chain fatty acids/VLCFAs per cycle. This enzyme reduces the trans-2,3-enoyl-CoA fatty acid intermediate to an acyl-CoA that can be further elongated by entering a new cycle of elongation. Thereby, it participates in the production of VLCFAs of different chain lengths that are involved in multiple biological processes as precursors of membrane lipids and lipid mediators. Catalyzes the saturation step of the sphingosine 1-phosphate metabolic pathway, the conversion of trans-2-hexadecenoyl-CoA to palmitoyl-CoA. The sequence is that of Very-long-chain enoyl-CoA reductase (Tecr) from Mus musculus (Mouse).